The sequence spans 371 residues: Cytochrome b (371 aa).

4 consecutive transmembrane segments (helical) span residues 25 to 45, 69 to 90, 105 to 125, and 170 to 190; these read FGSMLLTCLALQVLTGFFLAV, WMMQNLHAIGASMFFICIYIHI, WMSGITLLITLMATAFFGYVL, and FFALHFILPFAIISLSSLHVI. Heme b is bound by residues H75 and H89. Residues H174 and H188 each coordinate heme b. H193 is a binding site for a ubiquinone. Transmembrane regions (helical) follow at residues 218–238, 280–300, 312–332, and 339–358; these read HKDLLLLTLMMMFLFIIVSFF, LGGALALVMSIMILFCTPFTH, LSQLMFWTLVSTFITITWAAT, and FITISQVTSILYFTFFLSIP.

The protein belongs to the cytochrome b family. The cytochrome bc1 complex contains 3 respiratory subunits (MT-CYB, CYC1 and UQCRFS1), 2 core proteins (UQCRC1 and UQCRC2) and probably 6 low-molecular weight proteins. The cofactor is heme b.

The protein resides in the mitochondrion inner membrane. Its function is as follows. Component of the ubiquinol-cytochrome c reductase complex (complex III or cytochrome b-c1 complex) that is part of the mitochondrial respiratory chain. The b-c1 complex mediates electron transfer from ubiquinol to cytochrome c. Contributes to the generation of a proton gradient across the mitochondrial membrane that is then used for ATP synthesis. The polypeptide is Cytochrome b (MT-CYB) (Liasis mackloti savuensis (Savu python)).